Here is a 341-residue protein sequence, read N- to C-terminus: Paired box protein Pax-9 (341 aa).

A DNA-binding region (paired) is located at residues 4–130 (AFGEVNQLGG…SSISRILRNK (127 aa)). Positions 7–63 (EVNQLGGVFVNGRPLPNAIRLRIVELAQLGIRPCDISRQLRVSHGCVSKILARYNET) are PAI subdomain. An RED subdomain region spans residues 82–130 (TVVKHIRTYKQRDPGIFAWEIRDRLLADGVCDKYNVPSVSSISRILRNK). Residues 168–189 (AAAAKVPTPPGVPAIPGSVAMP) are interaction with KDM5B.

As to quaternary structure, interacts with KDM5B.

It is found in the nucleus. In terms of biological role, transcription factor required for normal development of thymus, parathyroid glands, ultimobranchial bodies, teeth, skeletal elements of skull and larynx as well as distal limbs. The sequence is that of Paired box protein Pax-9 (PAX9) from Saguinus oedipus (Cotton-top tamarin).